The following is a 625-amino-acid chain: Dual specificity protein phosphatase 8 (625 aa).

One can recognise a Rhodanese domain in the interval 23–138 (GPGGPLVIDS…FSSCFPGLCE (116 aa)). The region spanning 160–302 (GLTRILPHLY…LLEYERSLKL (143 aa)) is the Tyrosine-protein phosphatase domain. Cys246 acts as the Phosphocysteine intermediate in catalysis. The interval 306 to 586 (LQGDPGTPSG…PAPETQFKRR (281 aa)) is disordered. The span at 380–389 (SSDRLQDTNR) shows a compositional bias: basic and acidic residues. Over residues 431–448 (AALGLSSPSPDSPDAAPE) the composition is skewed to low complexity. Positions 555–570 (DLRRREAARAEPRDAR) are enriched in basic and acidic residues.

This sequence belongs to the protein-tyrosine phosphatase family. Non-receptor class dual specificity subfamily. In terms of assembly, monomer. As to expression, abundant in brain, heart and skeletal muscle.

The protein resides in the cytoplasm. It localises to the nucleus. It catalyses the reaction O-phospho-L-tyrosyl-[protein] + H2O = L-tyrosyl-[protein] + phosphate. The enzyme catalyses O-phospho-L-seryl-[protein] + H2O = L-seryl-[protein] + phosphate. The catalysed reaction is O-phospho-L-threonyl-[protein] + H2O = L-threonyl-[protein] + phosphate. In terms of biological role, has phosphatase activity with synthetic phosphatase substrates and negatively regulates mitogen-activated protein kinase activity, presumably by catalysing their dephosphorylation. Expected to display protein phosphatase activity toward phosphotyrosine, phosphoserine and phosphothreonine residues. This chain is Dual specificity protein phosphatase 8 (DUSP8), found in Homo sapiens (Human).